Here is a 189-residue protein sequence, read N- to C-terminus: Cytochrome bo(3) ubiquinol oxidase subunit 3 (189 aa).

Residues 1–10 are Cytoplasmic-facing; that stretch reads MIKETMRNNK. A helical membrane pass occupies residues 11 to 31; sequence LFGLWIYLMSDCIIFAVLFAV. Over 32 to 52 the chain is Extracellular; that stretch reads YAIISSNFSTNLINHKIFNLS. Residues 53 to 73 form a helical membrane-spanning segment; sequence YVFLETLILLLSSLSSGMLTI. Over 74–81 the chain is Cytoplasmic; that stretch reads QKNKNNIK. Residues 82–102 traverse the membrane as a helical segment; the sequence is IIYFYLLLTFFLGLSFLLMEV. The Extracellular segment spans residues 103 to 122; that stretch reads NEFYKLILENCSPSQHAFFS. Residues 123 to 143 form a helical membrane-spanning segment; the sequence is IFFTIVGVHGIHVFFGLIFIL. The Cytoplasmic segment spans residues 144–161; that stretch reads SILYQLFYLGITNTIRIR. A helical membrane pass occupies residues 162–182; sequence ILCFSLFWHFLDIIWICVFTF. Topologically, residues 183-189 are extracellular; the sequence is VYLNGVI.

The protein belongs to the cytochrome c oxidase subunit 3 family. In terms of assembly, heterooctamer of two A chains, two B chains, two C chains and two D chains.

The protein resides in the cell membrane. In terms of biological role, cytochrome bo(3) ubiquinol terminal oxidase is the component of the aerobic respiratory chain of E.coli that predominates when cells are grown at high aeration. Has proton pump activity across the membrane in addition to electron transfer, pumping 2 protons/electron. This Buchnera aphidicola subsp. Schizaphis graminum (strain Sg) protein is Cytochrome bo(3) ubiquinol oxidase subunit 3 (cyoC).